An 85-amino-acid chain; its full sequence is Probable [Fe-S]-dependent transcriptional repressor (85 aa).

4 residues coordinate iron-sulfur cluster: Cys56, Cys61, Cys64, and Cys71.

This sequence belongs to the FeoC family.

May function as a transcriptional regulator that controls feoABC expression. The polypeptide is Probable [Fe-S]-dependent transcriptional repressor (Yersinia pseudotuberculosis serotype O:1b (strain IP 31758)).